The chain runs to 284 residues: 2-dehydro-3-deoxyphosphooctonate aldolase (284 aa).

This sequence belongs to the KdsA family.

It localises to the cytoplasm. The enzyme catalyses D-arabinose 5-phosphate + phosphoenolpyruvate + H2O = 3-deoxy-alpha-D-manno-2-octulosonate-8-phosphate + phosphate. It functions in the pathway carbohydrate biosynthesis; 3-deoxy-D-manno-octulosonate biosynthesis; 3-deoxy-D-manno-octulosonate from D-ribulose 5-phosphate: step 2/3. Its pathway is bacterial outer membrane biogenesis; lipopolysaccharide biosynthesis. In Actinobacillus succinogenes (strain ATCC 55618 / DSM 22257 / CCUG 43843 / 130Z), this protein is 2-dehydro-3-deoxyphosphooctonate aldolase.